The chain runs to 725 residues: Threonine--tRNA ligase, cytoplasmic (725 aa).

In terms of domain architecture, TGS spans 80 to 142 (EPIQITLPDG…EGNAKLELLK (63 aa)).

Belongs to the class-II aminoacyl-tRNA synthetase family.

The protein resides in the cytoplasm. The enzyme catalyses tRNA(Thr) + L-threonine + ATP = L-threonyl-tRNA(Thr) + AMP + diphosphate + H(+). The polypeptide is Threonine--tRNA ligase, cytoplasmic (Caenorhabditis elegans).